Consider the following 188-residue polypeptide: Peptidyl-tRNA hydrolase (188 aa).

Position 16 (Tyr-16) interacts with tRNA. His-21 serves as the catalytic Proton acceptor. Positions 66, 68, and 114 each coordinate tRNA.

Belongs to the PTH family. As to quaternary structure, monomer.

It localises to the cytoplasm. The enzyme catalyses an N-acyl-L-alpha-aminoacyl-tRNA + H2O = an N-acyl-L-amino acid + a tRNA + H(+). Its function is as follows. Hydrolyzes ribosome-free peptidyl-tRNAs (with 1 or more amino acids incorporated), which drop off the ribosome during protein synthesis, or as a result of ribosome stalling. In terms of biological role, catalyzes the release of premature peptidyl moieties from peptidyl-tRNA molecules trapped in stalled 50S ribosomal subunits, and thus maintains levels of free tRNAs and 50S ribosomes. The sequence is that of Peptidyl-tRNA hydrolase from Geobacter sp. (strain M21).